Reading from the N-terminus, the 429-residue chain is Adenylosuccinate synthetase (429 aa).

GTP contacts are provided by residues 12–18 (GDEGKGK) and 40–42 (GHT). Catalysis depends on aspartate 13, which acts as the Proton acceptor. 2 residues coordinate Mg(2+): aspartate 13 and glycine 40. IMP is bound by residues 13–16 (DEGK), 38–41 (NAGH), threonine 128, arginine 142, glutamine 223, threonine 238, and arginine 302. The active-site Proton donor is the histidine 41. 298–304 (TTTGRPR) provides a ligand contact to substrate. Residues arginine 304, 330-332 (SID), and 412-414 (SVG) contribute to the GTP site.

This sequence belongs to the adenylosuccinate synthetase family. As to quaternary structure, homodimer. The cofactor is Mg(2+).

The protein localises to the cytoplasm. The enzyme catalyses IMP + L-aspartate + GTP = N(6)-(1,2-dicarboxyethyl)-AMP + GDP + phosphate + 2 H(+). It functions in the pathway purine metabolism; AMP biosynthesis via de novo pathway; AMP from IMP: step 1/2. In terms of biological role, plays an important role in the de novo pathway of purine nucleotide biosynthesis. Catalyzes the first committed step in the biosynthesis of AMP from IMP. This is Adenylosuccinate synthetase from Bacillus cereus (strain ATCC 10987 / NRS 248).